Here is a 140-residue protein sequence, read N- to C-terminus: MSAPARVPPLDPAILLAISLGGGLGALLRYLISTWWPTPPGHVPWATFVVNVTGCFAIGVLMVLVTEAWVTHRLLRPFAGVGLLGGFTTFSTYGLEIRTLLESGAVLEALGYLAGTVLAALAGVVLGTGAARWATGAARR.

4 helical membrane passes run 7 to 27 (VPPLDPAILLAISLGGGLGAL), 45 to 65 (WATFVVNVTGCFAIGVLMVLV), 77 to 97 (PFAGVGLLGGFTTFSTYGLEI), and 106 to 126 (VLEALGYLAGTVLAALAGVVL). Na(+) is bound by residues Gly85 and Thr88.

The protein belongs to the fluoride channel Fluc/FEX (TC 1.A.43) family.

It localises to the cell membrane. The catalysed reaction is fluoride(in) = fluoride(out). Na(+) is not transported, but it plays an essential structural role and its presence is essential for fluoride channel function. Its function is as follows. Fluoride-specific ion channel. Important for reducing fluoride concentration in the cell, thus reducing its toxicity. The protein is Fluoride-specific ion channel FluC 2 of Nocardia farcinica (strain IFM 10152).